The primary structure comprises 160 residues: Cytochrome b6-f complex subunit 4 (160 aa).

3 consecutive transmembrane segments (helical) span residues 36–56 (IFYM…GLAV), 96–116 (LGVL…FIKI), and 131–151 (TVFL…ALPI).

The protein belongs to the cytochrome b family. PetD subfamily. In terms of assembly, the 4 large subunits of the cytochrome b6-f complex are cytochrome b6, subunit IV (17 kDa polypeptide, petD), cytochrome f and the Rieske protein, while the 4 small subunits are petG, petL, petM and petN. The complex functions as a dimer.

It is found in the plastid. The protein resides in the chloroplast thylakoid membrane. In terms of biological role, component of the cytochrome b6-f complex, which mediates electron transfer between photosystem II (PSII) and photosystem I (PSI), cyclic electron flow around PSI, and state transitions. The polypeptide is Cytochrome b6-f complex subunit 4 (Auxenochlorella protothecoides (Green microalga)).